A 128-amino-acid chain; its full sequence is Holo-[acyl-carrier-protein] synthase (128 aa).

Mg(2+) is bound by residues Asp-9 and Glu-60.

It belongs to the P-Pant transferase superfamily. AcpS family. The cofactor is Mg(2+).

It localises to the cytoplasm. It catalyses the reaction apo-[ACP] + CoA = holo-[ACP] + adenosine 3',5'-bisphosphate + H(+). In terms of biological role, transfers the 4'-phosphopantetheine moiety from coenzyme A to a Ser of acyl-carrier-protein. This Buchnera aphidicola subsp. Baizongia pistaciae (strain Bp) protein is Holo-[acyl-carrier-protein] synthase.